The following is a 584-amino-acid chain: Aspartate--tRNA(Asp/Asn) ligase (584 aa).

L-aspartate is bound at residue Glu174. The aspartate stretch occupies residues 198–201; sequence QLFK. Arg220 serves as a coordination point for L-aspartate. ATP-binding positions include 220-222 and Gln229; that span reads RDE. An L-aspartate-binding site is contributed by His447. Glu480 provides a ligand contact to ATP. An L-aspartate-binding site is contributed by Arg487. 532–535 contacts ATP; the sequence is GFDR.

Belongs to the class-II aminoacyl-tRNA synthetase family. Type 1 subfamily. Homodimer.

Its subcellular location is the cytoplasm. The enzyme catalyses tRNA(Asx) + L-aspartate + ATP = L-aspartyl-tRNA(Asx) + AMP + diphosphate. In terms of biological role, aspartyl-tRNA synthetase with relaxed tRNA specificity since it is able to aspartylate not only its cognate tRNA(Asp) but also tRNA(Asn). Reaction proceeds in two steps: L-aspartate is first activated by ATP to form Asp-AMP and then transferred to the acceptor end of tRNA(Asp/Asn). This is Aspartate--tRNA(Asp/Asn) ligase from Endomicrobium trichonymphae.